We begin with the raw amino-acid sequence, 462 residues long: Argininosuccinate lyase (462 aa).

It belongs to the lyase 1 family. Argininosuccinate lyase subfamily.

The protein localises to the cytoplasm. It carries out the reaction 2-(N(omega)-L-arginino)succinate = fumarate + L-arginine. The protein operates within amino-acid biosynthesis; L-arginine biosynthesis; L-arginine from L-ornithine and carbamoyl phosphate: step 3/3. In Ehrlichia ruminantium (strain Welgevonden), this protein is Argininosuccinate lyase.